A 350-amino-acid polypeptide reads, in one-letter code: Glutamyl-tRNA reductase (350 aa).

Residues 53 to 56 (TCNR), S105, 110 to 112 (ETQ), and Q116 contribute to the substrate site. Residue C54 is the Nucleophile of the active site. 185–190 (GAGETA) is an NADP(+) binding site.

Belongs to the glutamyl-tRNA reductase family. In terms of assembly, homodimer.

It catalyses the reaction (S)-4-amino-5-oxopentanoate + tRNA(Glu) + NADP(+) = L-glutamyl-tRNA(Glu) + NADPH + H(+). It functions in the pathway porphyrin-containing compound metabolism; protoporphyrin-IX biosynthesis; 5-aminolevulinate from L-glutamyl-tRNA(Glu): step 1/2. Catalyzes the NADPH-dependent reduction of glutamyl-tRNA(Glu) to glutamate 1-semialdehyde (GSA). The polypeptide is Glutamyl-tRNA reductase (Deinococcus radiodurans (strain ATCC 13939 / DSM 20539 / JCM 16871 / CCUG 27074 / LMG 4051 / NBRC 15346 / NCIMB 9279 / VKM B-1422 / R1)).